The primary structure comprises 845 residues: Protein P (845 aa).

Residues 1–179 are terminal protein domain (TP); that stretch reads MPLSYQHFRK…FCGSPYSWEQ (179 aa). Residues 180 to 348 form a spacer region; that stretch reads ELHHGRSVTK…YCLSHLVNLL (169 aa). 3 disordered regions span residues 186–205, 222–245, and 288–318; these read SVTKTSQRHGDESFCSQPSG, QPRLGLQPHQGPLATSQSGRSGSI, and YSHLSTSKRQSSSGHAVEFHKVPPNSARSQS. A compositionally biased stretch (polar residues) spans 289 to 301; it reads SHLSTSKRQSSSG. Positions 349-692 are polymerase/reverse transcriptase domain (RT); that stretch reads EDWGPCADHG…YMNLYPVARQ (344 aa). The 244-residue stretch at 359–602 folds into the Reverse transcriptase domain; sequence EHHIRIPRTP…YSLNFMGYII (244 aa). Mg(2+)-binding residues include Asp-431, Asp-553, and Asp-554.

Belongs to the hepadnaviridae P protein family.

It carries out the reaction DNA(n) + a 2'-deoxyribonucleoside 5'-triphosphate = DNA(n+1) + diphosphate. It catalyses the reaction Endonucleolytic cleavage to 5'-phosphomonoester.. Its activity is regulated as follows. Activated by host HSP70 and HSP40 in vitro to be able to bind the epsilon loop of the pgRNA. Because deletion of the RNase H region renders the protein partly chaperone-independent, the chaperones may be needed indirectly to relieve occlusion of the RNA-binding site by this domain. Inhibited by several reverse-transcriptase inhibitors: Lamivudine, Adefovir and Entecavir. Its function is as follows. Multifunctional enzyme that converts the viral RNA genome into dsDNA in viral cytoplasmic capsids. This enzyme displays a DNA polymerase activity that can copy either DNA or RNA templates, and a ribonuclease H (RNase H) activity that cleaves the RNA strand of RNA-DNA heteroduplexes in a partially processive 3'- to 5'-endonucleasic mode. Neo-synthesized pregenomic RNA (pgRNA) are encapsidated together with the P protein, and reverse-transcribed inside the nucleocapsid. Initiation of reverse-transcription occurs first by binding the epsilon loop on the pgRNA genome, and is initiated by protein priming, thereby the 5'-end of (-)DNA is covalently linked to P protein. Partial (+)DNA is synthesized from the (-)DNA template and generates the relaxed circular DNA (RC-DNA) genome. After budding and infection, the RC-DNA migrates in the nucleus, and is converted into a plasmid-like covalently closed circular DNA (cccDNA). The activity of P protein does not seem to be necessary for cccDNA generation, and is presumably released from (+)DNA by host nuclear DNA repair machinery. The protein is Protein P of Hepatitis B virus genotype A3 (isolate Cameroon/CMR711/1994) (HBV-A).